The chain runs to 150 residues: Large ribosomal subunit protein bL9 (150 aa).

This sequence belongs to the bacterial ribosomal protein bL9 family.

Functionally, binds to the 23S rRNA. The chain is Large ribosomal subunit protein bL9 from Delftia acidovorans (strain DSM 14801 / SPH-1).